The sequence spans 783 residues: Mitochondrial intermediate peptidase (783 aa).

The N-terminal 33 residues, 1 to 33 (MKAGIPLSRCTQRIPLLVARQVSRNITTTTTKF), are a transit peptide targeting the mitochondrion. Histidine 565 contacts Zn(2+). Glutamate 566 is a catalytic residue. Zn(2+)-binding residues include histidine 569 and histidine 572.

This sequence belongs to the peptidase M3 family. Zn(2+) is required as a cofactor.

The protein localises to the mitochondrion matrix. The enzyme catalyses Release of an N-terminal octapeptide as second stage of processing of some proteins imported into the mitochondrion.. In terms of biological role, cleaves proteins, imported into the mitochondrion, to their mature size. While most mitochondrial precursor proteins are processed to the mature form in one step by mitochondrial processing peptidase (MPP), the sequential cleavage by MIP of an octapeptide after initial processing by MPP is a required step for a subgroup of nuclear-encoded precursor proteins destined for the matrix or the inner membrane. The polypeptide is Mitochondrial intermediate peptidase (OCT1) (Candida albicans (strain SC5314 / ATCC MYA-2876) (Yeast)).